Here is a 477-residue protein sequence, read N- to C-terminus: tRNA-2-methylthio-N(6)-dimethylallyladenosine synthase (477 aa).

Residues 3 to 120 (KKLYIKTWGC…LPEMINELKG (118 aa)) enclose the MTTase N-terminal domain. [4Fe-4S] cluster-binding residues include Cys12, Cys49, Cys83, Cys157, Cys161, and Cys164. The 233-residue stretch at 143–375 (RAEGPTAFVS…QQRITQQALR (233 aa)) folds into the Radical SAM core domain. Residues 378 to 441 (RHMVGTEQRI…TNSLRGEVVR (64 aa)) enclose the TRAM domain.

This sequence belongs to the methylthiotransferase family. MiaB subfamily. Monomer. Requires [4Fe-4S] cluster as cofactor.

It localises to the cytoplasm. The enzyme catalyses N(6)-dimethylallyladenosine(37) in tRNA + (sulfur carrier)-SH + AH2 + 2 S-adenosyl-L-methionine = 2-methylsulfanyl-N(6)-dimethylallyladenosine(37) in tRNA + (sulfur carrier)-H + 5'-deoxyadenosine + L-methionine + A + S-adenosyl-L-homocysteine + 2 H(+). In terms of biological role, catalyzes the methylthiolation of N6-(dimethylallyl)adenosine (i(6)A), leading to the formation of 2-methylthio-N6-(dimethylallyl)adenosine (ms(2)i(6)A) at position 37 in tRNAs that read codons beginning with uridine. The chain is tRNA-2-methylthio-N(6)-dimethylallyladenosine synthase from Alteromonas mediterranea (strain DSM 17117 / CIP 110805 / LMG 28347 / Deep ecotype).